The primary structure comprises 255 residues: Geranylgeranylglyceryl phosphate synthase (255 aa).

Residues aspartate 25 and serine 54 each contribute to the Mg(2+) site. Sn-glycerol 1-phosphate contacts are provided by residues 173–179 (YLEGGSG), 203–204 (GG), and 225–226 (GT).

The protein belongs to the GGGP/HepGP synthase family. Group II subfamily. The cofactor is Mg(2+).

It is found in the cytoplasm. It catalyses the reaction sn-glycerol 1-phosphate + (2E,6E,10E)-geranylgeranyl diphosphate = sn-3-O-(geranylgeranyl)glycerol 1-phosphate + diphosphate. Its pathway is membrane lipid metabolism; glycerophospholipid metabolism. Prenyltransferase that catalyzes the transfer of the geranylgeranyl moiety of geranylgeranyl diphosphate (GGPP) to the C3 hydroxyl of sn-glycerol-1-phosphate (G1P). This reaction is the first ether-bond-formation step in the biosynthesis of archaeal membrane lipids. The chain is Geranylgeranylglyceryl phosphate synthase from Thermofilum pendens (strain DSM 2475 / Hrk 5).